The following is a 69-amino-acid chain: Small, acid-soluble spore protein I (69 aa).

It belongs to the SspI family.

It localises to the spore core. The chain is Small, acid-soluble spore protein I from Shouchella clausii (strain KSM-K16) (Alkalihalobacillus clausii).